We begin with the raw amino-acid sequence, 180 residues long: uncharacterized protein (180 aa).

Its subcellular location is the mitochondrion. This is an uncharacterized protein from Marchantia polymorpha (Common liverwort).